The chain runs to 412 residues: Divalent metal cation transporter MntH (412 aa).

The next 10 membrane-spanning stretches (helical) occupy residues 19–39 (LSLMGPAFIAAIGYIDPGNFA), 46–66 (AAYGYTLLWVVVWANLMAMLI), 98–118 (WVQAEIIAMATDLAEFIGAAI), 122–142 (LLLGVSLLEGAILTAIATFLI), 155–175 (MVIGGLLLFVAAAYIVELVFS), 196–216 (AVLLAAGVLGATIMPHVIYLH), 241–261 (IAMTIAGFVNLAMMATAAAAF), 286–306 (AAAVIFGLSLVAAGLSSTVVG), 348–368 (VLVLSQVVLSFGIALALVPLL), and 392–412 (LIVVLVVSLNMYLLIDTMSGI).

Belongs to the NRAMP family.

The protein resides in the cell inner membrane. In terms of biological role, h(+)-stimulated, divalent metal cation uptake system. This chain is Divalent metal cation transporter MntH, found in Pectobacterium carotovorum subsp. carotovorum (strain PC1).